A 534-amino-acid chain; its full sequence is Probable inorganic phosphate transporter 1-8 (534 aa).

Residues 1–21 (MPIKVLSSLDVARTQWYHFKA) are Cytoplasmic-facing. Residues 22-42 (IIVAGMGLFTDAYDLFCIAPV) traverse the membrane as a helical segment. The Extracellular segment spans residues 43 to 61 (MKMISHVYYNGDSINTAVL). A helical membrane pass occupies residues 62-82 (STSYAIALLGTATGQLVFGYL). Residues 83 to 90 (GDRVGRRR) lie on the Cytoplasmic side of the membrane. The chain crosses the membrane as a helical span at residues 91–111 (VYGLCLIIMILSSFGCGFSVC). Residues 112 to 123 (TTRRSCVMVSLG) lie on the Extracellular side of the membrane. A helical transmembrane segment spans residues 124–144 (FFRFFLGLGIGGDYPLSATIM). Topologically, residues 145-153 (SEFANKRTR) are cytoplasmic. A helical membrane pass occupies residues 154–174 (GAFIAAVFSMQGLGILVSSAV). Residues 175–199 (TMAVCVAFKRSGGGLEVDAAAPTEA) are Extracellular-facing. The chain crosses the membrane as a helical span at residues 200-220 (DLAWRLILMIGALPAALTFYW). Topologically, residues 221 to 281 (RMLMPETARY…KLFSRCFFRL (61 aa)) are cytoplasmic. Residues 282–302 (HGRDLFAASFNWFLVDIVFYT) form a helical membrane-spanning segment. At 303-333 (SNLLLSHIFSHYSKKPSTAENVYDAAFEVAE) the chain is on the extracellular side. A helical transmembrane segment spans residues 334 to 354 (LGAIIAACSTIPGYWFTVYFI). Over 355-361 (DKIGRVK) the chain is Cytoplasmic. A helical membrane pass occupies residues 362-382 (IQIMGFFFMAVIYLVAGIPYS). Residues 383-396 (WYWSKHEHNNKGFM) are Extracellular-facing. The helical transmembrane segment at 397–417 (VLYGLVFFFCNFGPNTTTFII) threads the bilayer. Residues 418–431 (PAEHFPARFRSTCH) are Cytoplasmic-facing. Residues 432-452 (GISGAAGKLGAIVGTVGFLWA) traverse the membrane as a helical segment. Residues 453 to 472 (TKKMESDDKNQIYPEVNRMR) are Extracellular-facing. A helical membrane pass occupies residues 473 to 493 (IAFLILGGVCIAGILVTYFFT). The Cytoplasmic segment spans residues 494–534 (KETMGRSLEENEHDQDNNAESEDEPQIVDGQSSVSTLLQTR). The interval 501–534 (LEENEHDQDNNAESEDEPQIVDGQSSVSTLLQTR) is disordered. The span at 510–519 (NNAESEDEPQ) shows a compositional bias: acidic residues. Residue S514 is modified to Phosphoserine. Polar residues predominate over residues 522–534 (DGQSSVSTLLQTR).

Belongs to the major facilitator superfamily. Phosphate:H(+) symporter (TC 2.A.1.9) family. In roots.

Its subcellular location is the membrane. Its function is as follows. High-affinity transporter for external inorganic phosphate. This chain is Probable inorganic phosphate transporter 1-8 (PHT1-8), found in Arabidopsis thaliana (Mouse-ear cress).